The following is a 411-amino-acid chain: Methylthioribose-1-phosphate isomerase (411 aa).

Residue Ser-2 is modified to N-acetylserine. Asp-280 acts as the Proton donor in catalysis. Ser-351 carries the phosphoserine modification.

Belongs to the eIF-2B alpha/beta/delta subunits family. MtnA subfamily. As to quaternary structure, homodimer.

Its subcellular location is the cytoplasm. It localises to the nucleus. It catalyses the reaction 5-(methylsulfanyl)-alpha-D-ribose 1-phosphate = 5-(methylsulfanyl)-D-ribulose 1-phosphate. The protein operates within amino-acid biosynthesis; L-methionine biosynthesis via salvage pathway; L-methionine from S-methyl-5-thio-alpha-D-ribose 1-phosphate: step 1/6. Its function is as follows. Catalyzes the interconversion of methylthioribose-1-phosphate (MTR-1-P) into methylthioribulose-1-phosphate (MTRu-1-P). The sequence is that of Methylthioribose-1-phosphate isomerase from Saccharomyces cerevisiae (strain RM11-1a) (Baker's yeast).